The chain runs to 461 residues: Glycogen synthase (461 aa).

Position 15 (Lys-15) interacts with ADP-alpha-D-glucose.

This sequence belongs to the glycosyltransferase 1 family. Bacterial/plant glycogen synthase subfamily.

The enzyme catalyses [(1-&gt;4)-alpha-D-glucosyl](n) + ADP-alpha-D-glucose = [(1-&gt;4)-alpha-D-glucosyl](n+1) + ADP + H(+). The protein operates within glycan biosynthesis; glycogen biosynthesis. Functionally, synthesizes alpha-1,4-glucan chains using ADP-glucose. The polypeptide is Glycogen synthase (Fusobacterium nucleatum subsp. nucleatum (strain ATCC 25586 / DSM 15643 / BCRC 10681 / CIP 101130 / JCM 8532 / KCTC 2640 / LMG 13131 / VPI 4355)).